The sequence spans 422 residues: Inhibitor of growth protein 1 (422 aa).

The interval 261 to 349 (ELGDTAGNSG…EASPADLPID (89 aa)) is disordered. Residue Lys-278 forms a Glycyl lysine isopeptide (Lys-Gly) (interchain with G-Cter in SUMO2) linkage. A compositionally biased stretch (basic and acidic residues) spans 297–314 (RNNENRENASSNHDHDDG). The segment covering 322-334 (KKAKTSKKKKRSK) has biased composition (basic residues). A PHD-type zinc finger spans residues 353–402 (PTYCLCNQVSYGEMIGCDNDECPIEWFHFSCVGLNHKPKGKWYCPKCRGE). Zn(2+) contacts are provided by Cys-356, Cys-358, Cys-369, Cys-374, His-380, Cys-383, Cys-396, and Cys-399. A PBR region spans residues 405 to 422 (KTMDKALEKSKKERAYNR).

This sequence belongs to the ING family. As to quaternary structure, interacts with H3K4me3 and to a lesser extent with H3K4me2. Interacts with TP53. Isoform 2 interacts with RSL1D1. Isoform 2 was expressed in all normal tissues and cells examined, as well as in all breast cancer and melanoma cell lines examined. Isoform 3 was expressed in testis, liver, and kidney, weakly expressed in colon and brain and not expressed in breast and cultured melanocytes. Isoform 4 was highly expressed in testis and weakly expressed in brain, but not expressed in breast, colon, kidney, melanocytes, breast cancer or melanoma cell lines.

The protein localises to the nucleus. Functionally, cooperates with p53/TP53 in the negative regulatory pathway of cell growth by modulating p53-dependent transcriptional activation. Implicated as a tumor suppressor gene. This chain is Inhibitor of growth protein 1 (ING1), found in Homo sapiens (Human).